We begin with the raw amino-acid sequence, 273 residues long: SPRY domain-containing SOCS box protein 1 (273 aa).

Phosphotyrosine is present on Tyr31. One can recognise a B30.2/SPRY domain in the interval 33-231 (KPTRLDLLLD…IRMRYLNGLD (199 aa)). One can recognise an SOCS box domain in the interval 232–273 (PEPLPLMDLCRRSVRLALGKGRLGEIHALPLPASLKAYLLYQ).

It belongs to the SPSB family. As to quaternary structure, component of the probable ECS(SPSB1) E3 ubiquitin-protein ligase complex which contains CUL5, RNF7/RBX2, Elongin BC complex and SPSB1. Interacts with CUL5, RNF7, ELOB and ELOC. Directly interacts with MET tyrosine kinase domain in the presence and in the absence of HGF, however HGF treatment has a positive effect on this interaction. When phosphorylated, interacts with RASA1 without affecting its stability. Interacts (via B30.2/SPRY domain) with PAWR; this interaction is direct and occurs in association with the Elongin BC complex. Interacts with NOS2 and EPHB2.

The protein resides in the cytoplasm. It localises to the cytosol. It functions in the pathway protein modification; protein ubiquitination. Its function is as follows. Substrate recognition component of a SCF-like ECS (Elongin BC-CUL2/5-SOCS-box protein) E3 ubiquitin-protein ligase complex which mediates the ubiquitination and subsequent proteasomal degradation of target proteins. Negatively regulates nitric oxide (NO) production and limits cellular toxicity in activated macrophages by mediating the ubiquitination and proteasomal degradation of NOS2. Acts as a bridge which links NOS2 with the ECS E3 ubiquitin ligase complex components ELOC and CUL5. This chain is SPRY domain-containing SOCS box protein 1 (SPSB1), found in Bos taurus (Bovine).